We begin with the raw amino-acid sequence, 92 residues long: Sec-independent protein translocase protein TatA (92 aa).

Residues 1 to 21 (MGIFDWKHWIVILVVVVLVFG) form a helical membrane-spanning segment. The tract at residues 43–92 (MNDDEKPADPTVTPAQPVPPVQPQATAQANPPHTIDVQAQKVEEPIRKDV) is disordered. The span at 65-74 (PQATAQANPP) shows a compositional bias: low complexity. Positions 83 to 92 (KVEEPIRKDV) are enriched in basic and acidic residues.

This sequence belongs to the TatA/E family. The Tat system comprises two distinct complexes: a TatABC complex, containing multiple copies of TatA, TatB and TatC subunits, and a separate TatA complex, containing only TatA subunits. Substrates initially bind to the TatABC complex, which probably triggers association of the separate TatA complex to form the active translocon.

The protein resides in the cell inner membrane. Part of the twin-arginine translocation (Tat) system that transports large folded proteins containing a characteristic twin-arginine motif in their signal peptide across membranes. TatA could form the protein-conducting channel of the Tat system. The chain is Sec-independent protein translocase protein TatA from Pseudomonas fluorescens (strain Pf0-1).